A 71-amino-acid polypeptide reads, in one-letter code: MRGIILAQLLALAGSEKSQYEPFFSESKPYVYNYEGIILNGIPENGLARSGIKLNCKAEISGYAQRSYMLK.

The signal sequence occupies residues M1–S15. Positions F24–K71 constitute a Vitellogenin domain.

As to expression, produced by the liver, secreted into the blood and then sequestered by receptor mediated endocytosis into growing oocytes, where it is generally cleaved, giving rise to the respective yolk components.

Precursor of the major egg-yolk proteins that are sources of nutrients during early development of oviparous organisms. This chain is Vitellogenin-B1, found in Xenopus laevis (African clawed frog).